The primary structure comprises 265 residues: Diphthine synthase (265 aa).

S-adenosyl-L-methionine contacts are provided by residues leucine 10, aspartate 87, valine 90, 115–116, leucine 166, alanine 209, and histidine 234; that span reads SI.

The protein belongs to the diphthine synthase family. As to quaternary structure, homodimer.

The enzyme catalyses 2-[(3S)-amino-3-carboxypropyl]-L-histidyl-[translation elongation factor 2] + 3 S-adenosyl-L-methionine = diphthine-[translation elongation factor 2] + 3 S-adenosyl-L-homocysteine + 3 H(+). The protein operates within protein modification; peptidyl-diphthamide biosynthesis. Functionally, S-adenosyl-L-methionine-dependent methyltransferase that catalyzes the trimethylation of the amino group of the modified target histidine residue in translation elongation factor 2 (EF-2), to form an intermediate called diphthine. The three successive methylation reactions represent the second step of diphthamide biosynthesis. The sequence is that of Diphthine synthase from Pyrococcus horikoshii (strain ATCC 700860 / DSM 12428 / JCM 9974 / NBRC 100139 / OT-3).